A 153-amino-acid polypeptide reads, in one-letter code: UPF0266 membrane protein SG1324 (153 aa).

3 helical membrane passes run 6 to 26 (IGLVIMIVIALLFAVFDEFIV), 46 to 66 (LDGLIFIVLLLILLYKNITTD), and 68 to 88 (KVMTSTLILFLGLMVIYLAYI).

The protein belongs to the UPF0266 family.

The protein resides in the cell inner membrane. This Sodalis glossinidius (strain morsitans) protein is UPF0266 membrane protein SG1324.